The primary structure comprises 191 residues: Protein RER1 homolog (191 aa).

Helical transmembrane passes span 35–55 (AFRWVIALISLVFFASRIILL), 57–77 (GFYIVAYAVGIYYLNLFLLFL), and 135–155 (FFDVPVFWPILVMYFFILTFL).

The protein belongs to the RER1 family.

The protein resides in the membrane. Functionally, may be involved in protein transport along the secretory pathway. In Caenorhabditis elegans, this protein is Protein RER1 homolog (rer-1).